A 207-amino-acid chain; its full sequence is Ribosomal RNA small subunit methyltransferase G (207 aa).

S-adenosyl-L-methionine is bound by residues Gly73, Leu78, 124–125 (VE), and Arg139.

This sequence belongs to the methyltransferase superfamily. RNA methyltransferase RsmG family.

It is found in the cytoplasm. It catalyses the reaction guanosine(527) in 16S rRNA + S-adenosyl-L-methionine = N(7)-methylguanosine(527) in 16S rRNA + S-adenosyl-L-homocysteine. In terms of biological role, specifically methylates the N7 position of guanine in position 527 of 16S rRNA. The polypeptide is Ribosomal RNA small subunit methyltransferase G (Escherichia coli O17:K52:H18 (strain UMN026 / ExPEC)).